Consider the following 114-residue polypeptide: T cell receptor alpha variable 10 (114 aa).

An N-terminal signal peptide occupies residues methionine 1–glycine 21. The Ig-like domain occupies asparagine 23–serine 114. 2 N-linked (GlcNAc...) asparagine glycosylation sites follow: asparagine 39 and asparagine 45. Cysteine 44 and cysteine 111 are disulfide-bonded.

In terms of assembly, alpha-beta TR is a heterodimer composed of an alpha and beta chain; disulfide-linked. The alpha-beta TR is associated with the transmembrane signaling CD3 coreceptor proteins to form the TR-CD3 (TcR or TCR). The assembly of alpha-beta TR heterodimers with CD3 occurs in the endoplasmic reticulum where a single alpha-beta TR heterodimer associates with one CD3D-CD3E heterodimer, one CD3G-CD3E heterodimer and one CD247 homodimer forming a stable octameric structure. CD3D-CD3E and CD3G-CD3E heterodimers preferentially associate with TR alpha and TR beta chains, respectively. The association of the CD247 homodimer is the last step of TcR assembly in the endoplasmic reticulum and is required for transport to the cell surface.

Its subcellular location is the cell membrane. V region of the variable domain of T cell receptor (TR) alpha chain that participates in the antigen recognition. Alpha-beta T cell receptors are antigen specific receptors which are essential to the immune response and are present on the cell surface of T lymphocytes. Recognize peptide-major histocompatibility (MH) (pMH) complexes that are displayed by antigen presenting cells (APC), a prerequisite for efficient T cell adaptive immunity against pathogens. Binding of alpha-beta TR to pMH complex initiates TR-CD3 clustering on the cell surface and intracellular activation of LCK that phosphorylates the ITAM motifs of CD3G, CD3D, CD3E and CD247 enabling the recruitment of ZAP70. In turn ZAP70 phosphorylates LAT, which recruits numerous signaling molecules to form the LAT signalosome. The LAT signalosome propagates signal branching to three major signaling pathways, the calcium, the mitogen-activated protein kinase (MAPK) kinase and the nuclear factor NF-kappa-B (NF-kB) pathways, leading to the mobilization of transcription factors that are critical for gene expression and essential for T cell growth and differentiation. The T cell repertoire is generated in the thymus, by V-(D)-J rearrangement. This repertoire is then shaped by intrathymic selection events to generate a peripheral T cell pool of self-MH restricted, non-autoaggressive T cells. Post-thymic interaction of alpha-beta TR with the pMH complexes shapes TR structural and functional avidity. This Homo sapiens (Human) protein is T cell receptor alpha variable 10.